Here is a 561-residue protein sequence, read N- to C-terminus: Cation diffusion facilitator family protein 1 (561 aa).

Positions 1–20 are enriched in basic and acidic residues; the sequence is MEVTMEDRSVKADKADRDDN. Residues 1–26 form a disordered region; the sequence is MEVTMEDRSVKADKADRDDNNTTSTE. Topologically, residues 1-112 are cytoplasmic; that stretch reads MEVTMEDRSV…SESVKGVSRS (112 aa). The chain crosses the membrane as a helical span at residues 113-133; sequence LIIQIGMTVIFCALEFITGVV. Over 134-136 the chain is Extracellular; that stretch reads CSS. The helical transmembrane segment at 137 to 157 threads the bilayer; sequence IAMLADSYHMAADVMALIVAF. Residues 158-176 lie on the Cytoplasmic side of the membrane; sequence TCIKIATRPSTRLGYGWVR. The chain crosses the membrane as a helical span at residues 177-197; it reads AETLGGFFNGIFMCTVCVLVF. The Extracellular portion of the chain corresponds to 198–215; it reads QEAVGRIINVHMITHPLQ. Residues 216–236 form a helical membrane-spanning segment; that stretch reads VLVIGFIGLLINLFGMFNLSG. The Cytoplasmic segment spans residues 237–391; that stretch reads HGHSHGGGSH…NVNIHGVWLH (155 aa). The segment at 240–304 is disordered; sequence SHGGGSHGHS…HTRLNGKFRS (65 aa). The tract at residues 246–270 is 6 X 2 AA approximate repeats of H-G; sequence HGHSHGGSHGHSHNNKKTKKNDGHG. A compositionally biased stretch (basic residues) spans 247–264; that stretch reads GHSHGGSHGHSHNNKKTK. The helical transmembrane segment at 392 to 412 threads the bilayer; sequence LLSDAFGSVIVMISAGFVYFL. Topologically, residues 413-420 are extracellular; the sequence is PTWKIAAY. A helical membrane pass occupies residues 421–441; sequence LDPILSISLASIMGFTAVVLV. Residues 442–561 are Cytoplasmic-facing; it reads KTSGEKLLKQ…SVSTENEITE (120 aa).

This sequence belongs to the cation diffusion facilitator (CDF) transporter (TC 2.A.4) family. SLC30A subfamily. As to quaternary structure, interacts with lin-45 in a zinc-dependent manner. In terms of tissue distribution, expressed in intestinal cells. Expressed in the vulva.

The protein localises to the basolateral cell membrane. Functionally, involved in the regulation of Pn.p cell fate determination. Involved in zinc metabolism and the decrease of the cytosolic zinc concentration which is thought to modulate Ras signaling. Involved in zinc transport from the intestinal lumen to the pseudocoelum. The polypeptide is Cation diffusion facilitator family protein 1 (cdf-1) (Caenorhabditis elegans).